A 424-amino-acid polypeptide reads, in one-letter code: Histidinol dehydrogenase (424 aa).

NAD(+) is bound by residues tyrosine 121, glutamine 183, and asparagine 206. 3 residues coordinate substrate: serine 229, glutamine 251, and histidine 254. 2 residues coordinate Zn(2+): glutamine 251 and histidine 254. Active-site proton acceptor residues include glutamate 319 and histidine 320. The substrate site is built by histidine 320, aspartate 353, glutamate 407, and histidine 412. Aspartate 353 lines the Zn(2+) pocket. Histidine 412 is a binding site for Zn(2+).

It belongs to the histidinol dehydrogenase family. Zn(2+) is required as a cofactor.

It carries out the reaction L-histidinol + 2 NAD(+) + H2O = L-histidine + 2 NADH + 3 H(+). It functions in the pathway amino-acid biosynthesis; L-histidine biosynthesis; L-histidine from 5-phospho-alpha-D-ribose 1-diphosphate: step 9/9. Functionally, catalyzes the sequential NAD-dependent oxidations of L-histidinol to L-histidinaldehyde and then to L-histidine. The sequence is that of Histidinol dehydrogenase from Geobacillus kaustophilus (strain HTA426).